Consider the following 260-residue polypeptide: Phosphatidate cytidylyltransferase (260 aa).

7 consecutive transmembrane segments (helical) span residues 9–29, 46–66, 70–90, 102–122, 130–150, 172–192, and 196–216; these read IIAL…LMLF, MIKF…IIML, AGEW…FIVL, FMDA…FMYF, LRYI…AYIF, FFGG…FVDL, and IWLL…GDLV.

It belongs to the CDS family.

It localises to the cell membrane. The catalysed reaction is a 1,2-diacyl-sn-glycero-3-phosphate + CTP + H(+) = a CDP-1,2-diacyl-sn-glycerol + diphosphate. It functions in the pathway phospholipid metabolism; CDP-diacylglycerol biosynthesis; CDP-diacylglycerol from sn-glycerol 3-phosphate: step 3/3. This chain is Phosphatidate cytidylyltransferase (cdsA), found in Staphylococcus epidermidis (strain ATCC 35984 / DSM 28319 / BCRC 17069 / CCUG 31568 / BM 3577 / RP62A).